Here is a 606-residue protein sequence, read N- to C-terminus: Pentatricopeptide repeat-containing protein At1g31920 (606 aa).

PPR repeat units follow at residues 96–130 (CTFDFNTMIRGYVNVMSFEEALCFYNEMMQRGNEP), 131–165 (DNFTYPCLLKACTRLKSIREGKQIHGQVFKLGLEA), 166–200 (DVFVQNSLINMYGRCGEMELSSAVFEKLESKTAAS), 201–227 (WSSMVSARAGMGMWSECLLLFRGMCSE), 233–263 (EESGMVSALLACANTGALNLGMSIHGFLLRN), 268–298 (NIIVQTSLVDMYVKCGCLDKALHIFQKMEKR), 299–333 (NNLTYSAMISGLALHGEGESALRMFSKMIKEGLEP), 334–368 (DHVVYVSVLNACSHSGLVKEGRRVFAEMLKEGKVE), and 370–404 (TAEHYGCLVDLLGRAGLLEEALETIQSIPIEKNDV). The segment at 405 to 480 (IWRTFLSQCR…TPGFSIVELK (76 aa)) is type E motif. Residues 481–511 (GKTHRFVSQDRSHPKCKEIYKMLHQMEWQLK) form a type E(+) motif region. The interval 512–606 (FEGYSPDLTQ…GGTCSCKDYW (95 aa)) is type DYW motif.

It belongs to the PPR family. PCMP-H subfamily.

In Arabidopsis thaliana (Mouse-ear cress), this protein is Pentatricopeptide repeat-containing protein At1g31920 (PCMP-H11).